A 436-amino-acid polypeptide reads, in one-letter code: Histidinol dehydrogenase (436 aa).

NAD(+) is bound by residues tyrosine 136, glutamine 198, and asparagine 221. Positions 244, 266, and 269 each coordinate substrate. Residues glutamine 266 and histidine 269 each coordinate Zn(2+). Catalysis depends on proton acceptor residues glutamate 334 and histidine 335. Substrate contacts are provided by histidine 335, aspartate 368, glutamate 422, and histidine 427. A Zn(2+)-binding site is contributed by aspartate 368. Histidine 427 serves as a coordination point for Zn(2+).

It belongs to the histidinol dehydrogenase family. It depends on Zn(2+) as a cofactor.

The catalysed reaction is L-histidinol + 2 NAD(+) + H2O = L-histidine + 2 NADH + 3 H(+). It participates in amino-acid biosynthesis; L-histidine biosynthesis; L-histidine from 5-phospho-alpha-D-ribose 1-diphosphate: step 9/9. Its function is as follows. Catalyzes the sequential NAD-dependent oxidations of L-histidinol to L-histidinaldehyde and then to L-histidine. In Dehalococcoides mccartyi (strain ATCC BAA-2266 / KCTC 15142 / 195) (Dehalococcoides ethenogenes (strain 195)), this protein is Histidinol dehydrogenase.